The primary structure comprises 150 residues: D-aminoacyl-tRNA deacylase (150 aa).

The Gly-cisPro motif, important for rejection of L-amino acids signature appears at 138-139; the sequence is GP.

It belongs to the DTD family. In terms of assembly, homodimer.

It is found in the cytoplasm. It carries out the reaction glycyl-tRNA(Ala) + H2O = tRNA(Ala) + glycine + H(+). It catalyses the reaction a D-aminoacyl-tRNA + H2O = a tRNA + a D-alpha-amino acid + H(+). Functionally, an aminoacyl-tRNA editing enzyme that deacylates mischarged D-aminoacyl-tRNAs. Also deacylates mischarged glycyl-tRNA(Ala), protecting cells against glycine mischarging by AlaRS. Acts via tRNA-based rather than protein-based catalysis; rejects L-amino acids rather than detecting D-amino acids in the active site. By recycling D-aminoacyl-tRNA to D-amino acids and free tRNA molecules, this enzyme counteracts the toxicity associated with the formation of D-aminoacyl-tRNA entities in vivo and helps enforce protein L-homochirality. The chain is D-aminoacyl-tRNA deacylase from Cytophaga hutchinsonii (strain ATCC 33406 / DSM 1761 / CIP 103989 / NBRC 15051 / NCIMB 9469 / D465).